The following is a 587-amino-acid chain: Nucleoporin p58/p45 (587 aa).

Repeat copies occupy residues 7–8 (FG), 30–31 (FG), 44–45 (FG), 63–64 (FG), and 68–69 (FG). The segment at 7-567 (FGSGTLGSTT…VSNPASAGFG (561 aa)) is 14 X 2 AA repeats of F-G. The disordered stretch occupies residues 196 to 236 (TSAASNEGLGGIDFSTSSDKKSDKTGTRPEDSKALKDENLP). Residues 213-234 (SDKKSDKTGTRPEDSKALKDEN) are compositionally biased toward basic and acidic residues. 2 coiled-coil regions span residues 244 to 264 (ENLQ…SRMS) and 302 to 369 (ETAQ…SHIT). Residue threonine 319 is modified to Phosphothreonine. Tandem repeats lie at residues 476-477 (FG), 480-481 (FG), 501-502 (FG), 507-508 (FG), 517-518 (FG), 519-520 (FG), 533-534 (FG), 556-557 (FG), and 566-567 (FG). Positions 565-587 (GFGTGGQLLQLKRPPAGNKRGKR) are disordered.

Belongs to the NUP58 family. Component of the p62 complex, a complex at least composed of NUP62, NUP54, and NUP58. Interacts with NUTF2. Interacts with SRP1-alpha and Importin p97 proteins when they are together, but not with SRP1-alpha protein alone. O-glycosylated.

It is found in the nucleus. The protein localises to the nuclear pore complex. It localises to the nucleus membrane. Its function is as follows. Component of the nuclear pore complex, a complex required for the trafficking across the nuclear membrane. The polypeptide is Nucleoporin p58/p45 (Mus musculus (Mouse)).